A 305-amino-acid chain; its full sequence is Probable L-ribulose-5-phosphate 3-epimerase UlaE (305 aa).

It belongs to the L-ribulose-5-phosphate 3-epimerase family.

It catalyses the reaction L-ribulose 5-phosphate = L-xylulose 5-phosphate. It participates in cofactor degradation; L-ascorbate degradation; D-xylulose 5-phosphate from L-ascorbate: step 3/4. Its function is as follows. Catalyzes the isomerization of L-xylulose-5-phosphate to L-ribulose-5-phosphate. Is involved in the anaerobic L-ascorbate utilization. The protein is Probable L-ribulose-5-phosphate 3-epimerase UlaE (ulaE) of Mycoplasma pneumoniae (strain ATCC 29342 / M129 / Subtype 1) (Mycoplasmoides pneumoniae).